The chain runs to 387 residues: 3-ketoacyl-CoA thiolase (387 aa).

Cys-91 acts as the Acyl-thioester intermediate in catalysis. Active-site proton acceptor residues include His-343 and Cys-373.

It belongs to the thiolase-like superfamily. Thiolase family. Heterotetramer of two alpha chains (FadB) and two beta chains (FadA).

It localises to the cytoplasm. It catalyses the reaction an acyl-CoA + acetyl-CoA = a 3-oxoacyl-CoA + CoA. It participates in lipid metabolism; fatty acid beta-oxidation. Its function is as follows. Catalyzes the final step of fatty acid oxidation in which acetyl-CoA is released and the CoA ester of a fatty acid two carbons shorter is formed. The sequence is that of 3-ketoacyl-CoA thiolase from Salmonella paratyphi A (strain ATCC 9150 / SARB42).